We begin with the raw amino-acid sequence, 426 residues long: Enolase (426 aa).

(2R)-2-phosphoglycerate is bound at residue Gln-163. The active-site Proton donor is Glu-205. Mg(2+)-binding residues include Asp-242, Glu-283, and Asp-310. Lys-335, Arg-364, Ser-365, and Lys-386 together coordinate (2R)-2-phosphoglycerate. The active-site Proton acceptor is the Lys-335.

The protein belongs to the enolase family. The cofactor is Mg(2+).

The protein localises to the cytoplasm. It is found in the secreted. Its subcellular location is the cell surface. It catalyses the reaction (2R)-2-phosphoglycerate = phosphoenolpyruvate + H2O. Its pathway is carbohydrate degradation; glycolysis; pyruvate from D-glyceraldehyde 3-phosphate: step 4/5. Its function is as follows. Catalyzes the reversible conversion of 2-phosphoglycerate (2-PG) into phosphoenolpyruvate (PEP). It is essential for the degradation of carbohydrates via glycolysis. The polypeptide is Enolase (Beutenbergia cavernae (strain ATCC BAA-8 / DSM 12333 / CCUG 43141 / JCM 11478 / NBRC 16432 / NCIMB 13614 / HKI 0122)).